A 255-amino-acid chain; its full sequence is 5-oxoprolinase subunit A (255 aa).

Belongs to the LamB/PxpA family. In terms of assembly, forms a complex composed of PxpA, PxpB and PxpC.

The enzyme catalyses 5-oxo-L-proline + ATP + 2 H2O = L-glutamate + ADP + phosphate + H(+). Catalyzes the cleavage of 5-oxoproline to form L-glutamate coupled to the hydrolysis of ATP to ADP and inorganic phosphate. The polypeptide is 5-oxoprolinase subunit A (Campylobacter jejuni subsp. jejuni serotype O:2 (strain ATCC 700819 / NCTC 11168)).